A 239-amino-acid polypeptide reads, in one-letter code: Large ribosomal subunit protein uL1 (239 aa).

The protein belongs to the universal ribosomal protein uL1 family. In terms of assembly, part of the 50S ribosomal subunit.

Its function is as follows. Binds directly to 23S rRNA. The L1 stalk is quite mobile in the ribosome, and is involved in E site tRNA release. Functionally, protein L1 is also a translational repressor protein, it controls the translation of the L11 operon by binding to its mRNA. The sequence is that of Large ribosomal subunit protein uL1 from Rickettsia akari (strain Hartford).